Consider the following 283-residue polypeptide: Nucleotide-binding protein THEYE_A0235 (283 aa).

12–19 is an ATP binding site; it reads GLSGGGKT. 62 to 65 is a GTP binding site; the sequence is DIRV.

This sequence belongs to the RapZ-like family.

Displays ATPase and GTPase activities. This chain is Nucleotide-binding protein THEYE_A0235, found in Thermodesulfovibrio yellowstonii (strain ATCC 51303 / DSM 11347 / YP87).